We begin with the raw amino-acid sequence, 1068 residues long: Putative protein TIC 214 N-terminal part (1068 aa).

The next 6 helical transmembrane spans lie at 11–31, 68–88, 92–112, 131–151, 166–186, and 213–233; these read VLWVPILSWINFSSTFFLFGI, ITGQLLIFLSIFYSPLYVLLI, LLTLLVLPYILFYWYKIKDLI, IFFDSFIFQLFNPVVLPSPVL, FIFLLSSFLGWCFGQFLFVSL, and FSIIILSFSLLHLSRAPVPFI.

The protein belongs to the TIC214 family. As to quaternary structure, part of the Tic complex.

It localises to the plastid. Its subcellular location is the chloroplast inner membrane. Involved in protein precursor import into chloroplasts. May be part of an intermediate translocation complex acting as a protein-conducting channel at the inner envelope. This chain is Putative protein TIC 214 N-terminal part, found in Marchantia polymorpha (Common liverwort).